The following is a 173-amino-acid chain: Eggshell protein (173 aa).

The first 18 residues, 1 to 18, serve as a signal peptide directing secretion; sequence MKQSLTLVFLVAIGYATA. Positions 145 to 162 are enriched in gly residues; the sequence is GSGKGKGGGKGGKGGKGG. Residues 145–173 form a disordered region; the sequence is GSGKGKGGGKGGKGGKGGTYKPSHYGGGY.

This is Eggshell protein from Schistosoma mansoni (Blood fluke).